The sequence spans 95 residues: ESAT-6-like protein EsxA (95 aa).

It belongs to the WXG100 family. ESAT-6 subfamily. In terms of assembly, forms a tight 1:1 complex with EsxB. An artificial EsxA-EsxB heterodimer interacts with EspA.

The protein localises to the secreted. An exported protein. Unlike its M.tuberculosis counterpart has poor pore forming ability in artificial liposomes, does not undergo conformational change at acidic pH. Mutation of 2 residues to those found in M.tuberculosis (25-TA-26 to IH) alters the properties of this protein so that it inserts into liposomes at acidic pH, forming pores, like its M.tuberculosis counterpart. The polypeptide is ESAT-6-like protein EsxA (Mycolicibacterium smegmatis (strain ATCC 700084 / mc(2)155) (Mycobacterium smegmatis)).